The following is a 497-amino-acid chain: Probable cytosol aminopeptidase (497 aa).

The Mn(2+) site is built by lysine 263 and aspartate 268. Lysine 275 is an active-site residue. Mn(2+) contacts are provided by aspartate 286, aspartate 345, and glutamate 347. Arginine 349 is a catalytic residue.

This sequence belongs to the peptidase M17 family. Requires Mn(2+) as cofactor.

The protein localises to the cytoplasm. The enzyme catalyses Release of an N-terminal amino acid, Xaa-|-Yaa-, in which Xaa is preferably Leu, but may be other amino acids including Pro although not Arg or Lys, and Yaa may be Pro. Amino acid amides and methyl esters are also readily hydrolyzed, but rates on arylamides are exceedingly low.. It carries out the reaction Release of an N-terminal amino acid, preferentially leucine, but not glutamic or aspartic acids.. Functionally, presumably involved in the processing and regular turnover of intracellular proteins. Catalyzes the removal of unsubstituted N-terminal amino acids from various peptides. The sequence is that of Probable cytosol aminopeptidase from Rhizobium meliloti (strain 1021) (Ensifer meliloti).